The following is a 496-amino-acid chain: Tyrosine-protein kinase Srms (496 aa).

The SH3 domain occupies 55 to 116 (PRARLFRALY…PVTYLAKATP (62 aa)). The SH2 domain occupies 124-216 (WYFSGISRAQ…LIQNPLLQPC (93 aa)). The Protein kinase domain occupies 234–495 (FVLRRKLGEG…AINRRLHLGL (262 aa)). Residues 240–248 (LGEGFFGEV) and Lys262 contribute to the ATP site. Asp354 serves as the catalytic Proton acceptor. Tyr384 carries the phosphotyrosine; by autocatalysis modification.

It belongs to the protein kinase superfamily. Tyr protein kinase family. SRC subfamily. Interacts (via the SH2 and SH3 domains) with DOK1. Interacts with KHDRBS1/SAM68 and VIM. In terms of tissue distribution, higher expression in liver, lung, thymus and skin than in brain, kidney, heart and spleen. In skin, highly expressed in keratinocytes. Abundant in lung, liver, spleen, kidney and testis and is also detected in the cerebrum.

The protein localises to the cytoplasm. The catalysed reaction is L-tyrosyl-[protein] + ATP = O-phospho-L-tyrosyl-[protein] + ADP + H(+). Functionally, non-receptor tyrosine-protein kinase which phosphorylates DOK1 on tyrosine residues. Also phosphorylates KHDRBS1/SAM68 and VIM on tyrosine residues. Phosphorylation of KHDRBS1 is EGF-dependent. Phosphorylates OTUB1, promoting deubiquitination of RPTOR. The chain is Tyrosine-protein kinase Srms (Srms) from Mus musculus (Mouse).